The following is a 230-amino-acid chain: Interleukin-22 receptor subunit alpha-2 (230 aa).

Positions 1-20 (MMPKHCLLGLLIILLSSATE) are cleaved as a signal peptide. 2 consecutive Fibronectin type-III domains span residues 29–128 (TPQK…TKLD) and 129–230 (PPVV…VHIP). 2 disulfides stabilise this stretch: C77–C85 and C205–C226.

This sequence belongs to the type II cytokine receptor family. As to expression, highly expressed in lymph nodes and at lower levels in lung, spleen, and thymus. Not expressed in kidney, liver and heart.

The protein resides in the secreted. Receptor for IL22. Binds to IL22, prevents interaction with the functional IL-22R complex and blocks the activity of IL22 (in vitro). May play an important role as an IL22 antagonist in the regulation of inflammatory responses. The protein is Interleukin-22 receptor subunit alpha-2 (Il22ra2) of Mus musculus (Mouse).